The chain runs to 863 residues: DNA replication licensing factor mcm4-B (863 aa).

A disordered region spans residues 1 to 130; the sequence is MSSPTSTPSR…ARKVKQVDLH (130 aa). 2 stretches are compositionally biased toward polar residues: residues 54 to 64 and 84 to 99; these read SPSGDVQSPSG and LDLS…SSRV. A C4-type zinc finger spans residues 306 to 331; sequence CQVCAFTTRVEIDRGRIAEPSVCKHC. Positions 458 to 667 constitute an MCM domain; it reads IYERLAAALA…YDRRLAHHLV (210 aa). Residues tyrosine 471, arginine 497, lysine 516, serine 517, asparagine 618, arginine 643, arginine 732, and glutamate 735 each contribute to the ATP site. Positions 642-645 match the Arginine finger motif; sequence SRFD.

Belongs to the MCM family. In terms of assembly, component of the mcm2-7 complex (RLF-M). The complex forms a toroidal hexameric ring with the proposed subunit order mcm2-mcm6-mcm4-mcm7-mcm3-mcm5. The heterodimer of mmcm3/mcm5 interacts with mcm4, mmcm6, mcm7 and weakly with mcm2. Begins to associate with zmcm6 at the neurula stage. Component of the CMG helicase complex, composed of the mcm2-7 complex, the GINS complex and cdc45. In terms of processing, hyperphosphorylated during mitosis in a mechanism requiring cdc2-cyclin B and other kinases. Undergoes dephosphorylation after exiting mitosis, existing in a partially phosphorylated state in the cytosolic interphase mcm complex which associates with the pre-replication complexes (pre-Rcs). Complete dephosphorylation inactivates the mcm complex, preventing its binding to chromatin. Becomes actively phosphorylated during S phase once the mcm complex is assembled on the chromatin. This chromatin-associated phosphorylation occurs during the activation of the pre-Rcs and is independent of cdks. Phosphorylated by the cdc7-dbf4b complex.

It is found in the nucleus. It localises to the chromosome. The catalysed reaction is ATP + H2O = ADP + phosphate + H(+). Its function is as follows. Acts as a component of the MCM2-7 complex (MCM complex) which is the replicative helicase essential for 'once per cell cycle' DNA replication initiation and elongation in eukaryotic cells. Core component of CDC45-MCM-GINS (CMG) helicase, the molecular machine that unwinds template DNA during replication, and around which the replisome is built. The active ATPase sites in the MCM2-7 ring are formed through the interaction surfaces of two neighboring subunits such that a critical structure of a conserved arginine finger motif is provided in trans relative to the ATP-binding site of the Walker A box of the adjacent subunit. The six ATPase active sites, however, are likely to contribute differentially to the complex helicase activity. The sequence is that of DNA replication licensing factor mcm4-B (mcm4-b) from Xenopus laevis (African clawed frog).